The primary structure comprises 1896 residues: Trinucleotide repeat-containing gene 6A protein (1896 aa).

Basic and acidic residues-rich tracts occupy residues 1 to 21 and 39 to 57; these read MREL…RDLV and KKKE…KVPE. Disordered stretches follow at residues 1-137, 159-209, 222-250, and 257-276; these read MREL…LLKR, SESS…DCST, EAWP…SESE, and ASGN…GLGS. Residues 1–917 form an interaction with argonaute family proteins region; sequence MRELEAKATK…GDPPKCNQSL (917 aa). Low complexity-rich tracts occupy residues 69 to 93 and 101 to 113; these read ANSD…ASNQ and QQPQ…QQPQ. A compositionally biased stretch (basic residues) spans 125–137; it reads RFRHQEHKQLLKR. Residues 239-488 form a sufficient for interaction with AGO1, AGO3 and AGO4 region; it reads IDADSASNSE…QAPSVMNGTS (250 aa). Sufficient for interaction with AGO2 stretches follow at residues 255 to 331, 303 to 384, 325 to 424, 394 to 480, and 487 to 736; these read VMAS…NAWG, GALI…STIG, NRMN…KVSF, SKVS…QIQA, and TSLS…NGTE. Composition is skewed to polar residues over residues 396–410 and 417–429; these read VSGS…SLQE and SGTQ…GQPQ. 5 disordered regions span residues 396 to 461, 548 to 683, 703 to 998, 1011 to 1126, and 1143 to 1182; these read VSGS…NELP, FQVN…RRKI, LSNS…DPSK, IPEA…PTGW, and QELN…NKQE. Positions 430–443 are enriched in low complexity; sequence NITTETTGPNNTTN. Residues 444 to 461 show a composition bias toward polar residues; it reads FMTSSLPNSGSVQNNELP. Residues 551-1279 form a sufficient for interaction with AGO1 and AGO4 region; it reads NTNKGGGVWE…MFGVGNTAAQ (729 aa). Positions 573-584 are enriched in gly residues; it reads SGNGANSGGSRR. Polar residues-rich tracts occupy residues 591–617 and 635–647; these read QNTG…SANG and GSAT…QNSV. Positions 665-683 are enriched in basic and acidic residues; that stretch reads GRLEEKVTGESQSRDRRKI. The segment covering 703 to 722 has biased composition (polar residues); the sequence is LSNSGWGQTPIKQNTAWDTE. A compositionally biased stretch (basic and acidic residues) spans 723–733; that stretch reads TSPRGERKTDN. Position 724 is a phosphoserine (Ser-724). Polar residues predominate over residues 738 to 766; the sequence is WGSSATQTFNSGACTDKTSPNSNDTSSVS. The span at 858 to 871 shows a compositional bias: low complexity; that stretch reads SSSGGSDSDRSISG. A Phosphoserine modification is found at Ser-863. Composition is skewed to polar residues over residues 876 to 906 and 924 to 937; these read GKTS…SSQG and KPVS…QQDI. Residue Ser-976 is modified to Phosphoserine. 3 stretches are compositionally biased toward polar residues: residues 1033–1042, 1054–1064, and 1082–1105; these read AVSSKETSSG, TPATTVDNGTS, and AASN…SGPK. Residues 1059 to 1129 form a sufficient for interaction with AGO2 region; it reads VDNGTSAWGK…GSRPTGWEEE (71 aa). The span at 1143-1163 shows a compositional bias: low complexity; sequence QELNSSLNWPPYTKKMSSKGL. Phosphoserine is present on residues Ser-1197 and Ser-1255. Disordered regions lie at residues 1234 to 1256, 1273 to 1306, and 1360 to 1395; these read GDYN…ESSM, VGNT…PPPL, and QRAQ…QSRQ. Low complexity-rich tracts occupy residues 1284–1296 and 1360–1376; these read QQPP…SSQP and QRAQ…RQQQ. Thr-1406 is modified (phosphothreonine). 2 disordered regions span residues 1512 to 1570 and 1659 to 1685; these read MNSS…VTPG and PKNI…WDNS. Ser-1520 bears the Phosphoserine mark. The segment at 1605–1896 is sufficient for interaction with AGO2; the sequence is TSAWSSIRAS…DHLGGGGESM (292 aa). The RRM domain occupies 1716-1788; sequence NWLVLKNLTP…TTILAEFASE (73 aa). Residues Ser-1804 and Ser-1825 each carry the phosphoserine modification.

Belongs to the GW182 family. As to quaternary structure, interacts with AGO2. Interacts with AGO1, AGO3 and AGO4. Interacts with CNOT1; the interaction is direct and mediates the association with the CCR4-NOT complex. Interacts with ZC3H12A. Interacts with SND1. Interacts with GARRE1.

The protein resides in the cytoplasm. It localises to the P-body. Its function is as follows. Plays a role in RNA-mediated gene silencing by both micro-RNAs (miRNAs) and short interfering RNAs (siRNAs). Required for miRNA-dependent repression of translation and for siRNA-dependent endonucleolytic cleavage of complementary mRNAs by argonaute family proteins. As a scaffolding protein, associates with argonaute proteins bound to partially complementary mRNAs, and can simultaneously recruit CCR4-NOT and PAN deadenylase complexes. In Mus musculus (Mouse), this protein is Trinucleotide repeat-containing gene 6A protein (Tnrc6a).